A 120-amino-acid polypeptide reads, in one-letter code: UPF0231 protein YacL (120 aa).

Belongs to the UPF0231 family.

The sequence is that of UPF0231 protein YacL from Escherichia coli (strain SMS-3-5 / SECEC).